An 894-amino-acid polypeptide reads, in one-letter code: Mitogen-activated protein kinase kinase kinase kinase 3 (894 aa).

M1 bears the N-acetylmethionine mark. In terms of domain architecture, Protein kinase spans 16-273 (FELIQRIGSG…AEKLLQHPFV (258 aa)). ATP is bound by residues 22 to 30 (IGSGTYGDV) and K45. The Proton acceptor role is filled by D136. At S329 the chain carries Phosphoserine. Residues 339–358 (DPPLRKETEPHHELPDSDGF) are disordered. Positions 340–353 (PPLRKETEPHHELP) are enriched in basic and acidic residues. S398 carries the post-translational modification Phosphoserine. The tract at residues 408-537 (HVAHLEDDEG…VPKPISNGLP (130 aa)) is disordered. Residues 473–487 (HVPPRPPPPRLPPQK) are compositionally biased toward pro residues. The segment covering 508-520 (LYQQQSEQRGTNL) has biased composition (polar residues). Residues 556-867 (PLKIHCATSW…IFRLLGSDRV (312 aa)) form the CNH domain.

The protein belongs to the protein kinase superfamily. STE Ser/Thr protein kinase family. STE20 subfamily. Interacts with SH3GL2. Interaction appears to regulate MAP4K3-mediated JNK activation. The cofactor is Mg(2+).

The enzyme catalyses L-seryl-[protein] + ATP = O-phospho-L-seryl-[protein] + ADP + H(+). The catalysed reaction is L-threonyl-[protein] + ATP = O-phospho-L-threonyl-[protein] + ADP + H(+). In terms of biological role, serine/threonine kinase that plays a role in the response to environmental stress. Appears to act upstream of the JUN N-terminal pathway. Activator of the Hippo signaling pathway which plays a pivotal role in organ size control and tumor suppression by restricting proliferation and promoting apoptosis. MAP4Ks act in parallel to and are partially redundant with STK3/MST2 and STK4/MST2 in the phosphorylation and activation of LATS1/2, and establish MAP4Ks as components of the expanded Hippo pathway. The sequence is that of Mitogen-activated protein kinase kinase kinase kinase 3 (Map4k3) from Mus musculus (Mouse).